Here is a 72-residue protein sequence, read N- to C-terminus: Large ribosomal subunit protein uL29 (72 aa).

Belongs to the universal ribosomal protein uL29 family.

This Chlamydia felis (strain Fe/C-56) (Chlamydophila felis) protein is Large ribosomal subunit protein uL29.